The chain runs to 337 residues: MEKPWRLWGPLEACLLSVCAWSWGFCRVSLLALILTFHLYGGFVLLGLILASLAGILYKFQDVLLYFPDQPSSSRLYVPMPTGIPHENVYIRTKDGIRLNLILLRYTGENPAGAPTILYFHGNAGNIGHRVPNALLMLVNLKANVVLVDYRGYGKSEGDPSEDGLYQDAEATLDYVMTRPDIDKTKVVLFGRSLGGAVAIRLASCNPHRVAAIMVENTFLSIPHMAATLFSFFPMRYLPLWCYKNKFLSYRHVVPCRMPSLFISGLSDQLIPPVMMKQLYELSPSRTKRLAIFPEGTHNDTWQCQGYFSALEQFMKELLKSHAREETTQGTASVTII.

Residues leucine 30–leucine 50 traverse the membrane as a helical; Signal-anchor for type II membrane protein segment. Residues serine 193, aspartate 268, and histidine 298 each act as charge relay system in the active site. N-linked (GlcNAc...) asparagine glycosylation occurs at asparagine 299.

This sequence belongs to the serine esterase family.

Its subcellular location is the membrane. This is Protein ABHD13 from Danio rerio (Zebrafish).